The following is a 1284-amino-acid chain: ATP-dependent helicase fft2 (1284 aa).

2 stretches are compositionally biased toward polar residues: residues 1–10 (MLPYNSNYLS) and 20–57 (ENPQ…AMYG). Disordered regions lie at residues 1–57 (MLPY…AMYG), 185–252 (AQPP…LPPV), 317–339 (KQSP…QSQK), 353–388 (STQA…EEPE), and 446–465 (PDDV…KNPM). Positions 201-241 (RSNSRSSARSTARSAPRSTQRSRSSSANPVTTPPVNNTLLT) are enriched in low complexity. 2 stretches are compositionally biased toward polar residues: residues 320–339 (PVAS…QSQK) and 353–372 (STQA…ASKK). Residue serine 323 is modified to Phosphoserine. Over residues 376–388 (EEDEFYDSEEEPE) the composition is skewed to acidic residues. Residue serine 383 is modified to Phosphoserine. Positions 562–730 (HLLYQQKLSG…VSLLAFILPN (169 aa)) constitute a Helicase ATP-binding domain. 575–582 (DEMGLGKT) provides a ligand contact to ATP. The DEGH box motif lies at 681-684 (DEGH). The disordered stretch occupies residues 816–839 (QQLRRDDKRNKRSKNDEESDGKSL). A compositionally biased stretch (basic and acidic residues) spans 818-831 (LRRDDKRNKRSKND). A Helicase C-terminal domain is found at 928–1079 (VLKELLPKMK…SLSSDGKDRE (152 aa)). The tract at residues 1088 to 1284 (DMLDEENNGN…SEVDNNAAKD (197 aa)) is disordered. A compositionally biased stretch (polar residues) spans 1095–1107 (NGNNTKPEITGNE). The segment covering 1143–1177 (EKTDLADGDEKANIKTEMKSETVEGDNKELRETMK) has biased composition (basic and acidic residues). Positions 1180 to 1194 (NVQTDSNAAVPSSKS) are enriched in polar residues. Composition is skewed to basic and acidic residues over residues 1243–1256 (QLEK…KKPD) and 1266–1284 (EEEK…AAKD).

This sequence belongs to the SNF2/RAD54 helicase family.

Its subcellular location is the cytoplasm. The protein localises to the nucleus. It carries out the reaction ATP + H2O = ADP + phosphate + H(+). Functionally, DNA helicase that possesses intrinsic ATP-dependent nucleosome-remodeling activity and is required for heterochromatin organization. The protein is ATP-dependent helicase fft2 (fft2) of Schizosaccharomyces pombe (strain 972 / ATCC 24843) (Fission yeast).